Consider the following 293-residue polypeptide: Large ribosomal subunit protein uL18 (293 aa).

The segment at 249 to 273 is disordered; the sequence is DASPAAKKAAKPSKRHTAKRLTYDE. Residues 256–267 are compositionally biased toward basic residues; sequence KAAKPSKRHTAK.

It belongs to the universal ribosomal protein uL18 family. In terms of assembly, component of the large ribosomal subunit (LSU).

Its subcellular location is the cytoplasm. It is found in the nucleus. In terms of biological role, component of the ribosome, a large ribonucleoprotein complex responsible for the synthesis of proteins in the cell. The small ribosomal subunit (SSU) binds messenger RNAs (mRNAs) and translates the encoded message by selecting cognate aminoacyl-transfer RNA (tRNA) molecules. The large subunit (LSU) contains the ribosomal catalytic site termed the peptidyl transferase center (PTC), which catalyzes the formation of peptide bonds, thereby polymerizing the amino acids delivered by tRNAs into a polypeptide chain. The nascent polypeptides leave the ribosome through a tunnel in the LSU and interact with protein factors that function in enzymatic processing, targeting, and the membrane insertion of nascent chains at the exit of the ribosomal tunnel. This Caenorhabditis elegans protein is Large ribosomal subunit protein uL18 (rpl-5).